Reading from the N-terminus, the 868-residue chain is MAAKEKVAKETPLMKQYNEIKRKYPDACLLFRVGDFYETFGEDAIRASKILGITLTKRGAGSDTETALAGFPHHSINTYLPKLVKAGLRVAICDQLEDPKMTKTIVKRGVTELVTPGVSLNDEVLQSKTNNFLASVCFANKNIGISFLDVSTGEFLTAQGNAEYIDKLLQNFNPSEVLVPKNCKSEFKDAFGEDFHSFYLEDWIYKEDYALETLTKHFQTNSLKGFGVEELKEGIISAGAILYYLSETQHNRVQHITAIQRIAEDAYVWMDRFTIRNLELYHSYNPNAVTLLDVIDKTLSPMGGRLLKRWLALPLKDTNKIKGRHAVVSYLKSNPEILHNIQYQIKQISDLERLISKIAAGKVSPREIVYLKESLDAIIPIKTLALESPQEAVKVIGDSLHSCDLLREKIKTTLNQDAPVAISKGNAIATGVNEELDELRAISTSGKEFLEGIERRESERTGISSLKISFNNVFGYYIEVRNTHKDKVPEEWIRKQTLVNAERYITEELKEYETKILGAEEKIHKIESELFEQLVNWIATYIKPVQMNAYLVAQLDCLCSFTQMAVENQYVCPEIDDTFELDIKNGRHPVIEKQLPVGTPYIANDVFLDREKQQIIMITGPNMSGKSAILRQTALIVLLAQMGSFVPADSVRMGIVDKIFTRVGASDNISMGESTFMVEMNETASILNNISDRSLVLLDEIGRGTSTYDGISIAWAIAEFLHEHPSKAKTLFATHYHELNEMTESLPRIQNYNVAVKELKDTVLFVRKLVKGGSAHSFGIHVAKMAGMPQLVISKAQKLLKKLEKNHSSDALNGIKSANDEMQMSFFNLDDPLLEEIKEEILSLDINAITPVEALMKLNEIKRMLVKK.

620–627 (GPNMSGKS) serves as a coordination point for ATP.

This sequence belongs to the DNA mismatch repair MutS family.

Its function is as follows. This protein is involved in the repair of mismatches in DNA. It is possible that it carries out the mismatch recognition step. This protein has a weak ATPase activity. This Flavobacterium johnsoniae (strain ATCC 17061 / DSM 2064 / JCM 8514 / BCRC 14874 / CCUG 350202 / NBRC 14942 / NCIMB 11054 / UW101) (Cytophaga johnsonae) protein is DNA mismatch repair protein MutS.